The chain runs to 227 residues: [D-Ala2]-deltorphins (227 aa).

A signal peptide spans 1 to 20 (MSFLKKSLLLVLFLGLVSHS). Residues 21 to 46 (VCKEEKRETEEENENEEENHEVGSEM) constitute a propeptide that is removed on maturation. The disordered stretch occupies residues 22-227 (CKEEKRETEE…DVVGGEAKKM (206 aa)). Residues 30 to 39 (EEENENEEEN) show a composition bias toward acidic residues. D-alanine (Ala) is present on Ala-50. Positions 57–75 (DTEEKNENEEENQEEGSEM) are excised as a propeptide. Residues 62-72 (NENEEENQEEG) are compositionally biased toward acidic residues. Residues 73–87 (SEMKRYAFGYPKREP) show a composition bias toward basic and acidic residues. The residue at position 79 (Ala-79) is a D-alanine (Ala). Residues 86 to 104 (EPEEENENEEENHEEGSEM) constitute a propeptide that is removed on maturation. The span at 88–98 (EEENENEEENH) shows a compositional bias: acidic residues. Residues 99–108 (EEGSEMKRYA) show a composition bias toward basic and acidic residues. At Ala-108 the chain carries D-alanine (Ala). A Glycine amide modification is found at Gly-113. Positions 115–140 (EAKKMKREPEEENENEEENHEEGSEM) are excised as a propeptide. The segment covering 124-134 (EEENENEEENH) has biased composition (acidic residues). Positions 135 to 144 (EEGSEMKRYA) are enriched in basic and acidic residues. The residue at position 144 (Ala-144) is a D-alanine (Ala). Glycine amide is present on Gly-149. A propeptide spanning residues 151-176 (EAKKMKREPEEENENEEENHEEGSEM) is cleaved from the precursor. A compositionally biased stretch (acidic residues) spans 160-170 (EEENENEEENH). The segment covering 171-180 (EEGSEMKRYA) has biased composition (basic and acidic residues). The residue at position 180 (Ala-180) is a D-alanine (Ala). Position 185 is a glycine amide (Gly-185). Positions 187–212 (EAKKMKREPEEENENEEENHEEGSEM) are excised as a propeptide. Residues 196–206 (EEENENEEENH) are compositionally biased toward acidic residues. The segment covering 207 to 216 (EEGSEMKRYA) has biased composition (basic and acidic residues). Ala-216 is subject to D-alanine (Ala). Position 221 is a glycine amide (Gly-221). Positions 223–227 (EAKKM) are excised as a propeptide.

This sequence belongs to the frog skin active peptide (FSAP) family. Dermorphin subfamily. In terms of tissue distribution, expressed by the skin glands.

It is found in the secreted. Functionally, deltorphin is a heptapeptide with a very potent opiate-like activity. Has high affinity and selectivity for delta-type opioid receptors. The two dermorphin-like peptides have a similar affinity and selectivity for the mu opioid receptor as dermorphin. The chain is [D-Ala2]-deltorphins from Phyllomedusa bicolor (Two-colored leaf frog).